The following is a 287-amino-acid chain: Energy-coupling factor transporter ATP-binding protein EcfA1 (287 aa).

The ABC transporter domain maps to 6 to 248 (IVAEGVSYAY…ADRIRALRLD (243 aa)). 47–54 (GMNGSGKS) serves as a coordination point for ATP.

It belongs to the ABC transporter superfamily. Energy-coupling factor EcfA family. In terms of assembly, forms a stable energy-coupling factor (ECF) transporter complex composed of 2 membrane-embedded substrate-binding proteins (S component), 2 ATP-binding proteins (A component) and 2 transmembrane proteins (T component).

The protein resides in the cell membrane. ATP-binding (A) component of a common energy-coupling factor (ECF) ABC-transporter complex. Unlike classic ABC transporters this ECF transporter provides the energy necessary to transport a number of different substrates. This is Energy-coupling factor transporter ATP-binding protein EcfA1 from Symbiobacterium thermophilum (strain DSM 24528 / JCM 14929 / IAM 14863 / T).